The sequence spans 323 residues: 4-hydroxyphenylpyruvate 3-dimethylallyltransferase (323 aa).

Residues Arg-160 and Glu-281 each coordinate substrate.

The protein belongs to the aromatic prenyltransferase family. As to quaternary structure, monomer.

Its subcellular location is the cytoplasm. The catalysed reaction is 3-(4-hydroxyphenyl)pyruvate + dimethylallyl diphosphate = 3-dimethylallyl-4-hydroxyphenylpyruvate + diphosphate. Its pathway is antibiotic biosynthesis; novobiocin biosynthesis. Functionally, magnesium-independent aromatic prenyltransferase that catalyzes the irreversible transfer of a dimethylallyl group to 4-hydroxyphenylpyruvate to produce the ring A structure in the novobiocin biosynthesis pathway. Novobiocin is an aminocoumarin family antibiotic that targets bacterial DNA gyrases. It is able to prenylate many different compounds, including the phenylpropanoids 4-coumarate and caffeate, the plant polyketide resveratrol, the (iso)flavonoid naringenin, apigenin, daidzein and genistein, and the dihydroxynaphthalenes 1,6-DHN and 2,7-DHN. The chain is 4-hydroxyphenylpyruvate 3-dimethylallyltransferase from Streptomyces niveus (Streptomyces spheroides).